The sequence spans 23 residues: uncharacterized protein (23 aa).

Its subcellular location is the plastid. The protein localises to the chloroplast. This is an uncharacterized protein from Zea mays (Maize).